A 331-amino-acid polypeptide reads, in one-letter code: Ketol-acid reductoisomerase (NADP(+)) (331 aa).

One can recognise a KARI N-terminal Rossmann domain in the interval 2-182; the sequence is ARMYYDADAN…GGTRGGILET (181 aa). NADP(+)-binding positions include 25–28, serine 51, serine 53, and 83–86; these read YGSQ and DDVQ. The active site involves histidine 108. Glycine 134 is an NADP(+) binding site. A KARI C-terminal knotted domain is found at 183–328; the sequence is TFREETETDL…KDLRAMFSWL (146 aa). 4 residues coordinate Mg(2+): aspartate 191, glutamate 195, glutamate 227, and glutamate 231. Serine 252 contributes to the substrate binding site.

It belongs to the ketol-acid reductoisomerase family. Mg(2+) serves as cofactor.

The catalysed reaction is (2R)-2,3-dihydroxy-3-methylbutanoate + NADP(+) = (2S)-2-acetolactate + NADPH + H(+). It carries out the reaction (2R,3R)-2,3-dihydroxy-3-methylpentanoate + NADP(+) = (S)-2-ethyl-2-hydroxy-3-oxobutanoate + NADPH + H(+). Its pathway is amino-acid biosynthesis; L-isoleucine biosynthesis; L-isoleucine from 2-oxobutanoate: step 2/4. The protein operates within amino-acid biosynthesis; L-valine biosynthesis; L-valine from pyruvate: step 2/4. Functionally, involved in the biosynthesis of branched-chain amino acids (BCAA). Catalyzes an alkyl-migration followed by a ketol-acid reduction of (S)-2-acetolactate (S2AL) to yield (R)-2,3-dihydroxy-isovalerate. In the isomerase reaction, S2AL is rearranged via a Mg-dependent methyl migration to produce 3-hydroxy-3-methyl-2-ketobutyrate (HMKB). In the reductase reaction, this 2-ketoacid undergoes a metal-dependent reduction by NADPH to yield (R)-2,3-dihydroxy-isovalerate. The protein is Ketol-acid reductoisomerase (NADP(+)) of Picosynechococcus sp. (strain ATCC 27264 / PCC 7002 / PR-6) (Agmenellum quadruplicatum).